Reading from the N-terminus, the 423-residue chain is ER-bound oxygenase mpaB' (423 aa).

Over 1–22 (MSLSLPPALSELARALPYSRTQ) the chain is Lumenal. The helical transmembrane segment at 23-41 (WLPILVGFLIGYPLLIKAL) threads the bilayer. Residues 42–423 (RYKRLGEMKK…ISRTGKCPFH (382 aa)) lie on the Cytoplasmic side of the membrane.

The protein belongs to the mpaB oxygenase family.

The protein localises to the endoplasmic reticulum membrane. It catalyses the reaction 4-farnesyl-3,5-dihydroxy-6-methylphthalide + AH2 + 2 O2 = (4E,8E)-10-(4,6-dihydroxy-7-methyl-3-oxo-1,3-dihydro-2-benzofuran-5-yl)-4,8-dimethyldeca-4,8-dienoate + acetone + A + H2O + H(+). It participates in secondary metabolite biosynthesis; terpenoid biosynthesis. ER-bound oxygenase; part of the gene cluster that mediates the biosynthesis of mycophenolic acid (MPA), the first isolated antibiotic natural product in the world obtained from a culture of Penicillium brevicompactum in 1893. MpaB' catalyzes the oxidative cleavage the C19-C20 double bond in farnesyl-DHMP (FDHMP) to yield FDHMP-3C via a mycophenolic aldehyde intermediate. The first step of the pathway is the synthesis of 5-methylorsellinic acid (5MOA) by the cytosolic polyketide synthase mpaC. 5MOA is then converted to the phthalide compound 5,7-dihydroxy-4,6-dimethylphthalide (DHMP) by the endoplasmic reticulum-bound cytochrome P450 monooxygenase mpaDE. MpaDE first catalyzes hydroxylation of 5-MOA to 4,6-dihydroxy-2-(hydroxymethyl)-3-methylbenzoic acid (DHMB). MpaDE then acts as a lactone synthase that catalyzes the ring closure to convert DHMB into DHMP. The next step is the prenylation of DHMP by the Golgi apparatus-associated prenyltransferase mpaA to yield farnesyl-DHMP (FDHMP). The ER-bound oxygenase mpaB then mediates the oxidative cleavage the C19-C20 double bond in FDHMP to yield FDHMP-3C via a mycophenolic aldehyde intermediate. The O-methyltransferase mpaG catalyzes the methylation of FDHMP-3C to yield MFDHMP-3C. After the cytosolic methylation of FDHMP-3C, MFDHMP-3C enters into peroxisomes probably via free diffusion due to its low molecular weight. Upon a peroxisomal CoA ligation reaction, catalyzed by a beta-oxidation component enzyme acyl-CoA ligase ACL891, MFDHMP-3C-CoA would then be restricted to peroxisomes for the following beta-oxidation pathway steps. The peroxisomal beta-oxidation machinery than converts MFDHMP-3C-CoA into MPA_CoA, via a beta-oxidation chain-shortening process. Finally mpaH acts as a peroxisomal acyl-CoA hydrolase with high substrate specificity toward MPA-CoA to release the final product MPA. In Penicillium brevicompactum, this protein is ER-bound oxygenase mpaB'.